The following is a 328-amino-acid chain: MSEKIYEYKDENNWFIGKMTGHNLISGWGVKHTTIKKIDDLLDGIAATLDWENPKGYDVSVVRHQSPLSLITFIIDMINQETQREIKVTPHAGTILLMENAKLLAVYLPEGGVSTATFFATSEQGFGDIILIATRNEGKTKEFRNLFGQLGYRVENLNDYPELPEVAETGTTFEENARLKAETISRLTGKMVLADDSGLKVDALGGLPGVWSARFSGPDATDAKNNAKLLHELAMVFDQKKRSAQFHTTLVVAAPNKDSLVVEADWPGYIATQPKGENGFGYDPVFIVGETGHHAAELEADQKNQLSHRGQAVRKLMEVFPAWQAKQS.

The segment at 1-129 is unknown; sequence MSEKIYEYKD…ATSEQGFGDI (129 aa). Positions 130–324 are NTP pyrophosphatase; sequence ILIATRNEGK…KLMEVFPAWQ (195 aa). 134-139 is a binding site for substrate; it reads TRNEGK. The Proton acceptor role is filled by Asp-196. Asp-196 contributes to the Mg(2+) binding site. Substrate-binding positions include Ser-197, 280–283, Lys-303, and 308–309; these read FGYD and HR.

The protein belongs to the HAM1 NTPase family. Homodimer. It depends on Mg(2+) as a cofactor.

The catalysed reaction is XTP + H2O = XMP + diphosphate + H(+). The enzyme catalyses dITP + H2O = dIMP + diphosphate + H(+). It carries out the reaction ITP + H2O = IMP + diphosphate + H(+). Pyrophosphatase that catalyzes the hydrolysis of nucleoside triphosphates to their monophosphate derivatives, with a high preference for the non-canonical purine nucleotides XTP (xanthosine triphosphate), dITP (deoxyinosine triphosphate) and ITP. Seems to function as a house-cleaning enzyme that removes non-canonical purine nucleotides from the nucleotide pool, thus preventing their incorporation into DNA/RNA and avoiding chromosomal lesions. In Streptococcus pyogenes serotype M1, this protein is dITP/XTP pyrophosphatase.